The primary structure comprises 349 residues: Protein RecA (349 aa).

64 to 71 (GPESSGKT) is an ATP binding site. A disordered region spans residues 328-349 (NGEIEVEAPSEEEFEDLPLDLK). Positions 331–349 (IEVEAPSEEEFEDLPLDLK) are enriched in acidic residues.

The protein belongs to the RecA family.

The protein resides in the cytoplasm. In terms of biological role, can catalyze the hydrolysis of ATP in the presence of single-stranded DNA, the ATP-dependent uptake of single-stranded DNA by duplex DNA, and the ATP-dependent hybridization of homologous single-stranded DNAs. It interacts with LexA causing its activation and leading to its autocatalytic cleavage. The sequence is that of Protein RecA from Halalkalibacterium halodurans (strain ATCC BAA-125 / DSM 18197 / FERM 7344 / JCM 9153 / C-125) (Bacillus halodurans).